We begin with the raw amino-acid sequence, 282 residues long: Shikimate dehydrogenase (NADP(+)) (282 aa).

Shikimate is bound by residues 16–18 (SLS) and Thr63. Lys67 (proton acceptor) is an active-site residue. Shikimate is bound by residues Asn88 and Asp103. NADP(+)-binding positions include 128–132 (GAGGA) and Gly243.

Belongs to the shikimate dehydrogenase family. Homodimer.

It catalyses the reaction shikimate + NADP(+) = 3-dehydroshikimate + NADPH + H(+). Its pathway is metabolic intermediate biosynthesis; chorismate biosynthesis; chorismate from D-erythrose 4-phosphate and phosphoenolpyruvate: step 4/7. In terms of biological role, involved in the biosynthesis of the chorismate, which leads to the biosynthesis of aromatic amino acids. Catalyzes the reversible NADPH linked reduction of 3-dehydroshikimate (DHSA) to yield shikimate (SA). The protein is Shikimate dehydrogenase (NADP(+)) of Xylella fastidiosa (strain Temecula1 / ATCC 700964).